Here is a 493-residue protein sequence, read N- to C-terminus: Probable malate:quinone oxidoreductase (493 aa).

The protein belongs to the MQO family. Requires FAD as cofactor.

It catalyses the reaction (S)-malate + a quinone = a quinol + oxaloacetate. The protein operates within carbohydrate metabolism; tricarboxylic acid cycle; oxaloacetate from (S)-malate (quinone route): step 1/1. The chain is Probable malate:quinone oxidoreductase from Mycobacterium marinum (strain ATCC BAA-535 / M).